We begin with the raw amino-acid sequence, 128 residues long: Large ribosomal subunit protein bL12 (128 aa).

It belongs to the bacterial ribosomal protein bL12 family. In terms of assembly, homodimer. Part of the ribosomal stalk of the 50S ribosomal subunit. Forms a multimeric L10(L12)X complex, where L10 forms an elongated spine to which 2 to 4 L12 dimers bind in a sequential fashion. Binds GTP-bound translation factors.

Forms part of the ribosomal stalk which helps the ribosome interact with GTP-bound translation factors. Is thus essential for accurate translation. In Aquifex aeolicus (strain VF5), this protein is Large ribosomal subunit protein bL12.